The following is a 263-amino-acid chain: Post-GPI attachment to proteins factor 2 (263 aa).

The next 6 helical transmembrane spans lie at 16–36 (FVFC…LLSL), 69–89 (YIWR…AVAF), 109–129 (FLCN…LALT), 143–163 (CFGG…WLFS), 180–200 (YKIL…YLYW), and 208–228 (PGIY…NIFF).

Belongs to the PGAP2 family.

The protein localises to the golgi apparatus membrane. Its subcellular location is the endoplasmic reticulum membrane. Functionally, involved in the lipid remodeling steps of GPI-anchor maturation. Required for stable expression of GPI-anchored proteins at the cell surface. The sequence is that of Post-GPI attachment to proteins factor 2 from Caenorhabditis briggsae.